The primary structure comprises 480 residues: Glycogen synthase (480 aa).

Belongs to the glycosyltransferase 1 family. Bacterial/plant glycogen synthase subfamily.

It carries out the reaction [(1-&gt;4)-alpha-D-glucosyl](n) + ADP-alpha-D-glucose = [(1-&gt;4)-alpha-D-glucosyl](n+1) + ADP + H(+). It functions in the pathway glycan biosynthesis; glycogen biosynthesis. Functionally, synthesizes alpha-1,4-glucan chains using ADP-glucose. This Rhizobium etli (strain ATCC 51251 / DSM 11541 / JCM 21823 / NBRC 15573 / CFN 42) protein is Glycogen synthase.